Reading from the N-terminus, the 184-residue chain is MTWRSEHIWIELITGSRKISNFCWAFILFLGSLGFLLVGTSSYLGRNLISFFPPQQIVFFPQGIVMSFYGIAGLFISSYLWCTISWNVGSGYDRFDIKEGIVCIFRWGFPGKNRRIFLRFLIKDIQSVRIEVKEGIYARRVLYMDIRGQGSIPLTRTDENLTPREIEQKAAELAYFLRVPIEVF.

Transmembrane regions (helical) follow at residues 19 to 39 and 57 to 77; these read ISNFCWAFILFLGSLGFLLVG and IVFFPQGIVMSFYGIAGLFIS.

Belongs to the Ycf4 family.

It localises to the plastid. Its subcellular location is the chloroplast thylakoid membrane. Seems to be required for the assembly of the photosystem I complex. This chain is Photosystem I assembly protein Ycf4, found in Nicotiana tomentosiformis (Tobacco).